Here is a 502-residue protein sequence, read N- to C-terminus: Probable cytosol aminopeptidase (502 aa).

Residues Lys265 and Asp270 each contribute to the Mn(2+) site. Lys277 is an active-site residue. Mn(2+) is bound by residues Asp288, Asp347, and Glu349. Arg351 is an active-site residue.

It belongs to the peptidase M17 family. Mn(2+) is required as a cofactor.

The protein localises to the cytoplasm. It catalyses the reaction Release of an N-terminal amino acid, Xaa-|-Yaa-, in which Xaa is preferably Leu, but may be other amino acids including Pro although not Arg or Lys, and Yaa may be Pro. Amino acid amides and methyl esters are also readily hydrolyzed, but rates on arylamides are exceedingly low.. The catalysed reaction is Release of an N-terminal amino acid, preferentially leucine, but not glutamic or aspartic acids.. Presumably involved in the processing and regular turnover of intracellular proteins. Catalyzes the removal of unsubstituted N-terminal amino acids from various peptides. The polypeptide is Probable cytosol aminopeptidase (Rickettsia bellii (strain OSU 85-389)).